The chain runs to 285 residues: Pseudouridine-5'-phosphate glycosidase (285 aa).

Glu17 (proton donor) is an active-site residue. Substrate-binding residues include Lys77 and Val97. A Mn(2+)-binding site is contributed by Asp126. Residue 128–130 (SQD) coordinates substrate. Lys147 (nucleophile) is an active-site residue.

This sequence belongs to the pseudouridine-5'-phosphate glycosidase family. Homotrimer. It depends on Mn(2+) as a cofactor.

It carries out the reaction D-ribose 5-phosphate + uracil = psi-UMP + H2O. Functionally, catalyzes the reversible cleavage of pseudouridine 5'-phosphate (PsiMP) to ribose 5-phosphate and uracil. Functions biologically in the cleavage direction, as part of a pseudouridine degradation pathway. The chain is Pseudouridine-5'-phosphate glycosidase from Thermotoga maritima (strain ATCC 43589 / DSM 3109 / JCM 10099 / NBRC 100826 / MSB8).